Reading from the N-terminus, the 32-residue chain is ilv operon leader peptide (32 aa).

In Edwardsiella tarda, this protein is ilv operon leader peptide (ilvL).